The sequence spans 551 residues: Palmdelphin (551 aa).

Met1 bears the N-acetylmethionine mark. Residues 12–106 (QAITDKRKIQ…LQISTKEEAI (95 aa)) adopt a coiled-coil conformation. Residue Lys125 forms a Glycyl lysine isopeptide (Lys-Gly) (interchain with G-Cter in SUMO2) linkage. Ser135 bears the Phosphoserine mark. Lys179 participates in a covalent cross-link: Glycyl lysine isopeptide (Lys-Gly) (interchain with G-Cter in SUMO1); alternate. A Glycyl lysine isopeptide (Lys-Gly) (interchain with G-Cter in SUMO2); alternate cross-link involves residue Lys179. Basic and acidic residues predominate over residues 248–259 (ERNSKSPTEYHE). Positions 248 to 280 (ERNSKSPTEYHEPVYANPFYRPTTPQRETVTPG) are disordered. Polar residues predominate over residues 270-280 (TTPQRETVTPG). At Thr271 the chain carries Phosphothreonine. Residues Ser321, Ser370, Ser384, and Ser385 each carry the phosphoserine modification. 2 disordered regions span residues 342-392 (TPQK…QEDE) and 449-535 (DEEE…EDPS). The span at 484-495 (KRSEASPHENTN) shows a compositional bias: basic and acidic residues. 3 positions are modified to phosphoserine: Ser498, Ser515, and Ser520.

It belongs to the paralemmin family. In terms of assembly, interacts with GLUL. Phosphorylated. Ubiquitous. Most abundant in cardiac and skeletal muscle.

The protein resides in the cytoplasm. The protein localises to the cell projection. It localises to the dendrite. Its subcellular location is the dendritic spine. The sequence is that of Palmdelphin (PALMD) from Homo sapiens (Human).